A 312-amino-acid chain; its full sequence is Ribonuclease HIII (312 aa).

The RNase H type-2 domain occupies 95 to 311 (FNCIGSDEAG…REKAQKILKP (217 aa)). A divalent metal cation is bound by residues aspartate 101, glutamate 102, and aspartate 206.

It belongs to the RNase HII family. RnhC subfamily. Requires Mn(2+) as cofactor. Mg(2+) serves as cofactor.

It localises to the cytoplasm. It catalyses the reaction Endonucleolytic cleavage to 5'-phosphomonoester.. In terms of biological role, endonuclease that specifically degrades the RNA of RNA-DNA hybrids. The sequence is that of Ribonuclease HIII from Staphylococcus aureus (strain MW2).